The following is a 661-amino-acid chain: UvrABC system protein B (661 aa).

Residues 25 to 182 form the Helicase ATP-binding domain; sequence AGLSSKKRSQ…NDLINLQYER (158 aa). 38 to 45 is a binding site for ATP; the sequence is GITGSGKT. The Beta-hairpin signature appears at 91–114; sequence YYDYYQPEAYIARTDTFIEKDSSI. One can recognise a Helicase C-terminal domain in the interval 430–592; it reads QVEDLISEIQ…IIPKTINRAI (163 aa). In terms of domain architecture, UVR spans 621–656; that stretch reads KTHIDKLKKEMLKAASNLEFEQAVKLRDQLKTLEAA.

It belongs to the UvrB family. As to quaternary structure, forms a heterotetramer with UvrA during the search for lesions. Interacts with UvrC in an incision complex.

The protein resides in the cytoplasm. Functionally, the UvrABC repair system catalyzes the recognition and processing of DNA lesions. A damage recognition complex composed of 2 UvrA and 2 UvrB subunits scans DNA for abnormalities. Upon binding of the UvrA(2)B(2) complex to a putative damaged site, the DNA wraps around one UvrB monomer. DNA wrap is dependent on ATP binding by UvrB and probably causes local melting of the DNA helix, facilitating insertion of UvrB beta-hairpin between the DNA strands. Then UvrB probes one DNA strand for the presence of a lesion. If a lesion is found the UvrA subunits dissociate and the UvrB-DNA preincision complex is formed. This complex is subsequently bound by UvrC and the second UvrB is released. If no lesion is found, the DNA wraps around the other UvrB subunit that will check the other stand for damage. The polypeptide is UvrABC system protein B (Rickettsia peacockii (strain Rustic)).